The following is a 216-amino-acid chain: MPTLGITDFWTYVLGVVFVILLPGPNSLFVLATSAQRGVATGYRAACGVFLGDAVLMLLSALGVASLLKAEPMLFIGLKYLGAAYLFYLGVGMLRGAWRKLRNPEATAAQAEQVDVHQPFRKALLLSLSNPKAILFFISFFIQFVDPGYAYPGLSFLVLAVILELVSALYLSFLIFTGVRLAAWFRRRQRLAAGATSGVGALFVGFGVKLATATLS.

The next 6 membrane-spanning stretches (helical) occupy residues 12 to 32 (YVLG…FVLA), 48 to 68 (GVFL…ASLL), 74 to 94 (LFIG…VGML), 134 to 154 (ILFF…YPGL), 156 to 176 (FLVL…FLIF), and 191 to 211 (LAAG…VKLA).

The protein belongs to the Rht family.

It localises to the cell membrane. This is an uncharacterized protein from Pseudomonas aeruginosa (strain ATCC 15692 / DSM 22644 / CIP 104116 / JCM 14847 / LMG 12228 / 1C / PRS 101 / PAO1).